The following is a 150-amino-acid chain: Cytochrome c oxidase subunit 5A, mitochondrial (150 aa).

The transit peptide at Met1 to Tyr41 directs the protein to the mitochondrion. Residues Leu2–Ala17 carry the SIFI-degron motif. N6-acetyllysine is present on residues Lys87 and Lys113. Thr141 is subject to Phosphothreonine.

It belongs to the cytochrome c oxidase subunit 5A family. In terms of assembly, component of the cytochrome c oxidase (complex IV, CIV), a multisubunit enzyme composed of 14 subunits. The complex is composed of a catalytic core of 3 subunits MT-CO1, MT-CO2 and MT-CO3, encoded in the mitochondrial DNA, and 11 supernumerary subunits COX4I, COX5A, COX5B, COX6A, COX6B, COX6C, COX7A, COX7B, COX7C, COX8 and NDUFA4, which are encoded in the nuclear genome. The complex exists as a monomer or a dimer and forms supercomplexes (SCs) in the inner mitochondrial membrane with NADH-ubiquinone oxidoreductase (complex I, CI) and ubiquinol-cytochrome c oxidoreductase (cytochrome b-c1 complex, complex III, CIII), resulting in different assemblies (supercomplex SCI(1)III(2)IV(1) and megacomplex MCI(2)III(2)IV(2)). Interacts with AFG1L. Interacts with RAB5IF. Post-translationally, in response to mitochondrial stress, the precursor protein is ubiquitinated by the SIFI complex in the cytoplasm before mitochondrial import, leading to its degradation. Within the SIFI complex, UBR4 initiates ubiquitin chain that are further elongated or branched by KCMF1.

The protein resides in the mitochondrion inner membrane. It functions in the pathway energy metabolism; oxidative phosphorylation. Its function is as follows. Component of the cytochrome c oxidase, the last enzyme in the mitochondrial electron transport chain which drives oxidative phosphorylation. The respiratory chain contains 3 multisubunit complexes succinate dehydrogenase (complex II, CII), ubiquinol-cytochrome c oxidoreductase (cytochrome b-c1 complex, complex III, CIII) and cytochrome c oxidase (complex IV, CIV), that cooperate to transfer electrons derived from NADH and succinate to molecular oxygen, creating an electrochemical gradient over the inner membrane that drives transmembrane transport and the ATP synthase. Cytochrome c oxidase is the component of the respiratory chain that catalyzes the reduction of oxygen to water. Electrons originating from reduced cytochrome c in the intermembrane space (IMS) are transferred via the dinuclear copper A center (CU(A)) of subunit 2 and heme A of subunit 1 to the active site in subunit 1, a binuclear center (BNC) formed by heme A3 and copper B (CU(B)). The BNC reduces molecular oxygen to 2 water molecules using 4 electrons from cytochrome c in the IMS and 4 protons from the mitochondrial matrix. In Gorilla gorilla gorilla (Western lowland gorilla), this protein is Cytochrome c oxidase subunit 5A, mitochondrial (COX5A).